Reading from the N-terminus, the 323-residue chain is MSCLSRLNASAAPWEPPVARAMAVEQYCPPPQSLLPPPPLPPVAVPTTCGCAACLQGCFVPVGVQAAFPHAAAGCAPPPPVMPVMIVYRVVQPPPPAAHATRCQITEIEDGGGVETAKAVDGDEPQPFIRTVRSTRRRKAAAIRLPKAFRAALLPPPPPPCALGFTATTTSLMIRNIPNKFLKARLMAILDQHCADENGKCHRRGGGGGRSVVKSEYDFFYVPIDFKTGFNKGYAFVNMTTATAARRLRAFLQDHRWDAAMSGKVCDVVPAAIQGLDAFVAHFSASCFPCRTKEFLPVWFEPPRDGEQQTKAHVVGRLVVRPR.

The protein is Protein MEI2-like 6 (ML6) of Oryza sativa subsp. japonica (Rice).